A 1239-amino-acid polypeptide reads, in one-letter code: DNA polymerase subunit gamma-1 (1239 aa).

The interval 1–68 is disordered; sequence MSRLLWRKVA…PQVLSSEGGQ (68 aa). Composition is skewed to low complexity over residues 9-36 and 44-60; these read VAGATVGPGPVPAPGRWVSSSVPASDPS and QQQQQQQQQQQQPQQPQ. Residues 43–55 form a does not contribute to polymerase and exonuclease enzymatic activities region; sequence QQQQQQQQQQQQQ. An Exo I motif is present at residues 196-200; it reads VFDVE. Residue aspartate 198 is the Exonuclease activity of the active site. The Exo II signature appears at 267 to 275; it reads VGHNVSFDR. Serine 306 lines the DNA pocket. The disordered stretch occupies residues 318 to 340; that stretch reads GKHKVQPPTKQGQKSQRKARRGP. The short motif at 395–403 is the Exo III element; it reads YCAQDVWAT. The tract at residues 506–531 is disordered; the sequence is EPATASKLPIEGAGAPGDPMDQEDLG. The accessory-interacting determinant stretch occupies residues 510 to 571; sequence ASKLPIEGAG…RPQHLPGHPG (62 aa). Arginine 579 provides a ligand contact to RNA. Serine 593 is a binding site for DNA. Residues histidine 754, glycine 763, and lysine 768 each contribute to the RNA site. DNA contacts are provided by lysine 806 and threonine 849. The tract at residues 858–864 is trigger loop; sequence TWLTASN. Serine 863 and arginine 869 together coordinate RNA. The Pol A signature appears at 887 to 896; it reads VGADVDSQEL. A 2'-deoxyribonucleoside 5'-triphosphate-binding residues include aspartate 890, valine 891, serine 893, glutamate 895, arginine 943, lysine 947, and tyrosine 951. 2 residues coordinate Mg(2+): aspartate 890 and valine 891. The Pol B signature appears at 943-958; that stretch reads REHAKIFNYGRIYGAG. DNA is bound by residues threonine 1094 and serine 1095. The Pol C motif lies at 1134–1141; it reads HDEVRYLV. Residue aspartate 1135 coordinates a 2'-deoxyribonucleoside 5'-triphosphate. Mg(2+) is bound at residue aspartate 1135.

This sequence belongs to the DNA polymerase type-A family. Heterotrimer composed of a catalytic subunit and a homodimer of accessory subunits (POLG:POLG2). Interacts with TTC3. Interacts with LIG3. It depends on Mg(2+) as a cofactor.

It localises to the mitochondrion. Its subcellular location is the mitochondrion matrix. It is found in the mitochondrion nucleoid. It catalyses the reaction DNA(n) + a 2'-deoxyribonucleoside 5'-triphosphate = DNA(n+1) + diphosphate. The enzyme catalyses a 3'-end 2'-deoxyribonucleotidyl-deoxyribonucleotide-DNA + H2O = a 3'-end 2'-deoxyribonucleotide-DNA + a 2'-deoxyribonucleoside 5'-phosphate + H(+). It carries out the reaction a 5'-end 2'-deoxyribose-2'-deoxyribonucleotide-DNA = (2E,4S)-4-hydroxypenten-2-al-5-phosphate + a 5'-end 5'-phospho-2'-deoxyribonucleoside-DNA + H(+). Inhibited by dideoxynucleotides such as antiviral agent zalcitabine. Catalytic subunit of DNA polymerase gamma solely responsible for replication of mitochondrial DNA (mtDNA). Replicates both heavy and light strands of the circular mtDNA genome using a single-stranded DNA template, RNA primers and the four deoxyribonucleoside triphosphates as substrates. Has 5' -&gt; 3' polymerase activity. Functionally interacts with TWNK and SSBP1 at the replication fork to form a highly processive replisome, where TWNK unwinds the double-stranded DNA template prior to replication and SSBP1 covers the parental heavy strand to enable continuous replication of the entire mitochondrial genome. A single nucleotide incorporation cycle includes binding of the incoming nucleotide at the insertion site, a phosphodiester bond formation reaction that extends the 3'-end of the primer DNA, and translocation of the primer terminus to the post-insertion site. After completing replication of a mtDNA strand, mediates 3' -&gt; 5' exonucleolytic degradation at the nick to enable proper ligation. Highly accurate due to high nucleotide selectivity and 3' -&gt; 5' exonucleolytic proofreading. Proficiently corrects base substitutions, single-base additions and deletions in non-repetitive sequences and short repeats, but displays lower proofreading activity when replicating longer homopolymeric stretches. Exerts exonuclease activity toward single-stranded DNA and double-stranded DNA containing 3'-terminal mispairs. When a misincorporation occurs, transitions from replication to a pro-nucleolytic editing mode and removes the missincorporated nucleoside in the exonuclease active site. Proceeds via an SN2 nucleolytic mechanism in which Asp-198 catalyzes phosphodiester bond hydrolysis and Glu-200 stabilizes the leaving group. As a result the primer strand becomes one nucleotide shorter and is positioned in the post-insertion site, ready to resume DNA synthesis. Exerts 5'-deoxyribose phosphate (dRP) lyase activity and mediates repair-associated mtDNA synthesis (gap filling) in base-excision repair pathway. Catalyzes the release of the 5'-terminal 2-deoxyribose-5-phosphate sugar moiety from incised apurinic/apyrimidinic (AP) sites to produce a substrate for DNA ligase. The dRP lyase reaction does not require divalent metal ions and likely proceeds via a Schiff base intermediate in a beta-elimination reaction mechanism. The polypeptide is DNA polymerase subunit gamma-1 (Homo sapiens (Human)).